The following is a 437-amino-acid chain: GTPase Obg (437 aa).

One can recognise an Obg domain in the interval 2–160 (SLFLDTARIE…KILLLELRVL (159 aa)). Residues 161–338 (ADVGLVGFPS…LLARTSELLA (178 aa)) form the OBG-type G domain. Residues 167–174 (GFPSVGKS), 192–196 (FTTIT), 214–217 (DMPG), 284–287 (NKMD), and 319–321 (SGL) each bind GTP. Positions 174 and 194 each coordinate Mg(2+). The region spanning 359 to 437 (GFEEEEKPFK…IQKFEFEFVD (79 aa)) is the OCT domain.

The protein belongs to the TRAFAC class OBG-HflX-like GTPase superfamily. OBG GTPase family. As to quaternary structure, monomer. The cofactor is Mg(2+).

The protein resides in the cytoplasm. An essential GTPase which binds GTP, GDP and possibly (p)ppGpp with moderate affinity, with high nucleotide exchange rates and a fairly low GTP hydrolysis rate. Plays a role in control of the cell cycle, stress response, ribosome biogenesis and in those bacteria that undergo differentiation, in morphogenesis control. The polypeptide is GTPase Obg (Lactococcus lactis subsp. lactis (strain IL1403) (Streptococcus lactis)).